The sequence spans 576 residues: Low-affinity glucose transporter HXT4 (576 aa).

Positions 1–56 (MSEEAAYQEDTAVQNTPADALSPVESDSNSALSTPSNKAERDDMKDFDENHEESNN) are disordered. The Cytoplasmic segment spans residues 1–66 (MSEEAAYQED…YVEIPKKPAS (66 aa)). A compositionally biased stretch (polar residues) spans 25–37 (ESDSNSALSTPSN). The span at 38–54 (KAERDDMKDFDENHEES) shows a compositional bias: basic and acidic residues. Residue K45 forms a Glycyl lysine isopeptide (Lys-Gly) (interchain with G-Cter in ubiquitin) linkage. The helical transmembrane segment at 67 to 87 (AYVTVSICCLMVAFGGFVFGW) threads the bilayer. Residues 88-122 (DTGTISGFVAQTDFIRRFGMKHHDGTYYLSKVRTG) are Extracellular-facing. Residues 123–143 (LIVSIFNIGCAIGGIILAKLG) form a helical membrane-spanning segment. Over 144–149 (DMYGRK) the chain is Cytoplasmic. A helical membrane pass occupies residues 150–170 (MGLIVVVVIYIIGIIIQIASI). Topologically, residues 171–180 (NKWYQYFIGR) are extracellular. The chain crosses the membrane as a helical span at residues 181-201 (IISGLGVGGIAVLSPMLISEV). Over 202–207 (SPKHIR) the chain is Cytoplasmic. Residues 208 to 228 (GTLVSCYQLMITLGIFLGYCT) form a helical membrane-spanning segment. Topologically, residues 229-242 (NYGTKTYTNSVQWR) are extracellular. The chain crosses the membrane as a helical span at residues 243–263 (VPLGLGFAWALFMIGGMTFVP). Residues 264 to 346 (ESPRYLVEVG…IQSLQQLTGD (83 aa)) lie on the Cytoplasmic side of the membrane. The helical transmembrane segment at 347–363 (NYFFYYGTTVFTAVGLE) threads the bilayer. At 364 to 369 (DSFETS) the chain is on the extracellular side. The chain crosses the membrane as a helical span at residues 370–387 (IVLGIVNFASTFVGIFLV). The Cytoplasmic portion of the chain corresponds to 388-394 (ERYGRRR). The helical transmembrane segment at 395–415 (CLLWGAASMTACMVVFASVGV) threads the bilayer. The Extracellular portion of the chain corresponds to 416 to 437 (TRLWPNGKKNGSSKGAGNCMIV). A glycan (N-linked (GlcNAc...) asparagine) is linked at N425. A helical membrane pass occupies residues 438-458 (FTCFYLFCFATTWAPIPFVVN). Topologically, residues 459 to 475 (SETFPLRVKSKCMAIAQ) are cytoplasmic. The chain crosses the membrane as a helical span at residues 476–496 (ACNWIWGFLIGFFTPFISGAI). A topological domain (extracellular) is located at residue D497. Residues 498 to 518 (FYYGYVFMGCLVFSYFYVFFF) traverse the membrane as a helical segment. Over 519–576 (VPETKGLTLEEVNTLWEEGVLPWKSPSWVPPNKRGTDYNADDLMHDDQPFYKKMFGKK) the chain is Cytoplasmic.

Belongs to the major facilitator superfamily. Sugar transporter (TC 2.A.1.1) family.

The protein localises to the cell membrane. Its activity is regulated as follows. Xylose uptake is strongly inhibited by glucose. In terms of biological role, low-affinity glucose transporter. Can also transport xylose. The protein is Low-affinity glucose transporter HXT4 (HXT4) of Saccharomyces cerevisiae (strain ATCC 204508 / S288c) (Baker's yeast).